The chain runs to 213 residues: Kiwellin (213 aa).

A signal peptide spans 1-24 (MAQLALLLLSLFLTLISLAPPGAS). 3 disulfide bridges follow: cysteine 28–cysteine 60, cysteine 32–cysteine 44, and cysteine 38–cysteine 49. Residues proline 65 and proline 67 each carry the 4-hydroxyproline modification. Intrachain disulfides connect cysteine 72–cysteine 90, cysteine 80–cysteine 172, cysteine 119–cysteine 144, and cysteine 166–cysteine 172. A disordered region spans residues 91–121 (SPPVTSSTPAKLTNNDFSEGGDDGGPSECDE). Residues 93-107 (PVTSSTPAKLTNNDF) show a composition bias toward polar residues.

It belongs to the kiwellin family. In terms of processing, undergoes proteolytic cleavage by actinidin to produce kissper and KiTH. Three forms of KiTH are produced by cleavage at different sites, the main form produced in vivo is KiTH-1.

It is found in the secreted. Its function is as follows. pH-dependent, voltage-gated and anion-selective pore-forming peptide. The chain is Kiwellin from Actinidia deliciosa (Kiwi).